The primary structure comprises 891 residues: Aconitate hydratase A (891 aa).

Positions 435, 501, and 504 each coordinate [4Fe-4S] cluster.

It belongs to the aconitase/IPM isomerase family. As to quaternary structure, monomer. [4Fe-4S] cluster is required as a cofactor.

It carries out the reaction citrate = D-threo-isocitrate. It participates in carbohydrate metabolism; tricarboxylic acid cycle; isocitrate from oxaloacetate: step 2/2. In terms of biological role, catalyzes the reversible isomerization of citrate to isocitrate via cis-aconitate. The apo form of AcnA functions as a RNA-binding regulatory protein which plays a role as a maintenance or survival enzyme during nutritional or oxidative stress. During oxidative stress inactive AcnA apo-enzyme without iron sulfur clusters binds the acnA mRNA 3' UTRs (untranslated regions), stabilizes acnA mRNA and increases AcnA synthesis, thus mediating a post-transcriptional positive autoregulatory switch. AcnA also enhances the stability of the sodA transcript. The polypeptide is Aconitate hydratase A (Escherichia coli (strain K12)).